We begin with the raw amino-acid sequence, 648 residues long: Probable ATP-dependent RNA helicase DDX43 (648 aa).

Residues 1 to 60 (MSHHGGAPKASTWVVASRRSSTVSRAPERRPAEELNRTGPEGYSVGRGGRWRGTSRPPEA) are disordered. A compositionally biased stretch (low complexity) spans 10–25 (ASTWVVASRRSSTVSR). The span at 26–36 (APERRPAEELN) shows a compositional bias: basic and acidic residues. The region spanning 67 to 128 (ELPLCFALKS…AMQTKAKAVI (62 aa)) is the KH domain. The Q motif signature appears at 242 to 270 (TFDDAFQCYPEVMENIKKAGFQKPTPIQS). The Helicase ATP-binding domain occupies 273-448 (WPIVLQGIDL…QSYLKEPMIV (176 aa)). 286–293 (AQTGTGKT) contacts ATP. The DEAD box motif lies at 396–399 (DEAD). One can recognise a Helicase C-terminal domain in the interval 460–621 (SVKQNIIVTT…SIPEELVSMA (162 aa)). The span at 628–641 (QQKREMERKMERPQ) shows a compositional bias: basic and acidic residues. The interval 628–648 (QQKREMERKMERPQGRPKKFH) is disordered.

It belongs to the DEAD box helicase family. As to expression, expressed in testis. Expressed in many tumors of various histological types at a level that is 100-fold higher than the level observed in normal tissues except testis.

It catalyses the reaction ATP + H2O = ADP + phosphate + H(+). This chain is Probable ATP-dependent RNA helicase DDX43 (DDX43), found in Homo sapiens (Human).